Here is a 204-residue protein sequence, read N- to C-terminus: 3-dehydroquinate dehydratase (204 aa).

3-dehydroquinate-binding positions include S9, 30 to 32 (ELR), and R57. Catalysis depends on H108, which acts as the Proton donor/acceptor. Residue K133 is the Schiff-base intermediate with substrate of the active site. 3-dehydroquinate-binding residues include R167, T186, and Q190.

Belongs to the type-I 3-dehydroquinase family. Homodimer.

The enzyme catalyses 3-dehydroquinate = 3-dehydroshikimate + H2O. Its pathway is metabolic intermediate biosynthesis; chorismate biosynthesis; chorismate from D-erythrose 4-phosphate and phosphoenolpyruvate: step 3/7. Functionally, involved in the third step of the chorismate pathway, which leads to the biosynthesis of aromatic amino acids. Catalyzes the cis-dehydration of 3-dehydroquinate (DHQ) and introduces the first double bond of the aromatic ring to yield 3-dehydroshikimate. In Metallosphaera sedula (strain ATCC 51363 / DSM 5348 / JCM 9185 / NBRC 15509 / TH2), this protein is 3-dehydroquinate dehydratase.